Here is a 320-residue protein sequence, read N- to C-terminus: ATP-dependent 6-phosphofructokinase (320 aa).

Gly12 contacts ATP. Residues 22 to 26 and 55 to 60 each bind ADP; these read RGVVR and RYSVSD. Residues 73-74 and 103-106 each bind ATP; these read RF and GDGS. Asp104 is a Mg(2+) binding site. Position 126-128 (126-128) interacts with substrate; it reads TID. Asp128 (proton acceptor) is an active-site residue. Position 155 (Arg155) interacts with ADP. Substrate-binding positions include Arg163 and 170 to 172; that span reads MGR. ADP contacts are provided by residues 186–188, Lys212, and 214–216; these read GCE and KKH. Substrate-binding positions include Glu223, Arg244, and 250-253; that span reads HIQR.

Belongs to the phosphofructokinase type A (PFKA) family. ATP-dependent PFK group I subfamily. Prokaryotic clade 'B1' sub-subfamily. In terms of assembly, homotetramer. It depends on Mg(2+) as a cofactor.

The protein resides in the cytoplasm. The catalysed reaction is beta-D-fructose 6-phosphate + ATP = beta-D-fructose 1,6-bisphosphate + ADP + H(+). The protein operates within carbohydrate degradation; glycolysis; D-glyceraldehyde 3-phosphate and glycerone phosphate from D-glucose: step 3/4. With respect to regulation, allosterically activated by ADP and other diphosphonucleosides, and allosterically inhibited by phosphoenolpyruvate. Its function is as follows. Catalyzes the phosphorylation of D-fructose 6-phosphate to fructose 1,6-bisphosphate by ATP, the first committing step of glycolysis. This is ATP-dependent 6-phosphofructokinase from Escherichia fergusonii (strain ATCC 35469 / DSM 13698 / CCUG 18766 / IAM 14443 / JCM 21226 / LMG 7866 / NBRC 102419 / NCTC 12128 / CDC 0568-73).